The sequence spans 122 residues: MSITKDQILEAFAAMSVMDVVELIEAMEEKFGVSAAAATVAVGGDAGAAAEEQTEFDVVMTSHGDNKVAVIKAVRGATGLGLKEAKTMAESSPIAIKEGVSKEEAEALKKDLEAAGAVVEIK.

This sequence belongs to the bacterial ribosomal protein bL12 family. Homodimer. Part of the ribosomal stalk of the 50S ribosomal subunit. Forms a multimeric L10(L12)X complex, where L10 forms an elongated spine to which 2 to 4 L12 dimers bind in a sequential fashion. Binds GTP-bound translation factors.

Functionally, forms part of the ribosomal stalk which helps the ribosome interact with GTP-bound translation factors. Is thus essential for accurate translation. This is Large ribosomal subunit protein bL12 from Shewanella denitrificans (strain OS217 / ATCC BAA-1090 / DSM 15013).